The primary structure comprises 323 residues: Quinolinate synthase (323 aa).

The iminosuccinate site is built by His-39 and Ser-56. A [4Fe-4S] cluster-binding site is contributed by Cys-101. Residues 127–129 (YIN) and Ser-144 contribute to the iminosuccinate site. Cys-187 lines the [4Fe-4S] cluster pocket. Residues 213-215 (HPE) and Thr-230 contribute to the iminosuccinate site. Cys-280 lines the [4Fe-4S] cluster pocket.

Belongs to the quinolinate synthase family. Type 2 subfamily. [4Fe-4S] cluster serves as cofactor.

The protein localises to the cytoplasm. The catalysed reaction is iminosuccinate + dihydroxyacetone phosphate = quinolinate + phosphate + 2 H2O + H(+). It functions in the pathway cofactor biosynthesis; NAD(+) biosynthesis; quinolinate from iminoaspartate: step 1/1. Its function is as follows. Catalyzes the condensation of iminoaspartate with dihydroxyacetone phosphate to form quinolinate. This is Quinolinate synthase from Chlorobium phaeobacteroides (strain DSM 266 / SMG 266 / 2430).